The following is a 410-amino-acid chain: MNQQLKNLTLPIYMDYQSTTPIDPRVMEAMLPYFTTKFGNPHSRSHSFGWEAENAVENARSMIAKLIGADSKEIIFTSGATESNNLVIKGIAKFYGNKKNHIITLVSEHKCVLNACRYLEQEGIKITYLPIKPNGIIDLEILKNAITDQTLLVSVMAVNNEIGVIQPLREIGKICRERSVFFHSDIAQGFGKIPINVNEYNIDLASISGHKIYGPKGIGALYIRKKPRVRVTPLINGGGQERGMRSGTLPTPLIVGFGIAAEISYNEMEKDAQHVNYLFDRFLNNIYSRIPEVYLNGDKDQRYKGNLNLSFAGVEGESIILAIKDLAVSSGSACTSASLEPSYVLRSIGISEELAHTSIRFGIGRFTTEQEIDYAVNLICSKIDKLRKLSPLWEMMQEGIDLKKIKWTAH.

Pyridoxal 5'-phosphate is bound by residues 80 to 81 (AT), Asn160, Gln188, and 208 to 210 (SGH). Lys211 carries the N6-(pyridoxal phosphate)lysine modification. Residue Thr248 coordinates pyridoxal 5'-phosphate. Cys334 functions as the Cysteine persulfide intermediate in the catalytic mechanism. Position 334 (Cys334) interacts with [2Fe-2S] cluster.

Belongs to the class-V pyridoxal-phosphate-dependent aminotransferase family. NifS/IscS subfamily. In terms of assembly, homodimer. Forms a heterotetramer with IscU, interacts with other sulfur acceptors. The cofactor is pyridoxal 5'-phosphate.

It is found in the cytoplasm. It carries out the reaction (sulfur carrier)-H + L-cysteine = (sulfur carrier)-SH + L-alanine. The protein operates within cofactor biosynthesis; iron-sulfur cluster biosynthesis. Functionally, master enzyme that delivers sulfur to a number of partners involved in Fe-S cluster assembly, tRNA modification or cofactor biosynthesis. Catalyzes the removal of elemental sulfur atoms from cysteine to produce alanine. Functions as a sulfur delivery protein for Fe-S cluster synthesis onto IscU, an Fe-S scaffold assembly protein, as well as other S acceptor proteins. The polypeptide is Cysteine desulfurase IscS (Rickettsia typhi (strain ATCC VR-144 / Wilmington)).